The chain runs to 435 residues: 5-methylthioadenosine/S-adenosylhomocysteine deaminase (435 aa).

Residues H65 and H67 each contribute to the Zn(2+) site. Substrate is bound by residues E94, R150, and H189. H216 contributes to the Zn(2+) binding site. E219 and D304 together coordinate substrate. D304 is a binding site for Zn(2+).

The protein belongs to the metallo-dependent hydrolases superfamily. MTA/SAH deaminase family. It depends on Zn(2+) as a cofactor.

The enzyme catalyses S-adenosyl-L-homocysteine + H2O + H(+) = S-inosyl-L-homocysteine + NH4(+). It catalyses the reaction S-methyl-5'-thioadenosine + H2O + H(+) = S-methyl-5'-thioinosine + NH4(+). Its function is as follows. Catalyzes the deamination of 5-methylthioadenosine and S-adenosyl-L-homocysteine into 5-methylthioinosine and S-inosyl-L-homocysteine, respectively. Is also able to deaminate adenosine. In Bacillus cereus (strain AH187), this protein is 5-methylthioadenosine/S-adenosylhomocysteine deaminase.